The following is a 198-amino-acid chain: Dynein light chain Tctex-type protein 2 (198 aa).

Residues 1 to 34 (MEKRGRGVKSSPIQTPNQTPQQAPVTPRKERRPS) form a disordered region. Positions 11-24 (SPIQTPNQTPQQAP) are enriched in polar residues.

This sequence belongs to the dynein light chain Tctex-type family. In terms of assembly, interacts with CCDC159. Interacts with CSNK2B. In terms of tissue distribution, expressed predominantly in testis. Also expressed in brain, lung and trachea.

The protein resides in the cytoplasm. The protein localises to the cytoskeleton. Its subcellular location is the cytoplasmic granule. It localises to the membrane. May be an accessory component of axonemal dynein and cytoplasmic dynein 1. Candidate for involvement in male sterility. The polypeptide is Dynein light chain Tctex-type protein 2 (Homo sapiens (Human)).